Reading from the N-terminus, the 383-residue chain is MDFNLTDIQQDFLKLAHDFGEKKLAPTVTERDHKGIYDKELIDELLSLGITGAYFEEKYGGSGDDGGDVLSYILAVEELAKYDAGVAITLSATVSLCANPIWQFGTEAQKEKFLVPLVEGTKLGAFGLTEPNAGTDASGQQTIATKNDDGTYTLNGSKIFITNGGAADIYIVFAMTDKSKGNHGITAFILEDGTPGFTYGKKEDKMGIHTSQTMELVFQDVKVPAENMLGEEGKGFKIAMMTLDGGRIGVAAQALGIAEAALADAVEYSKQRVQFGKPLCKFQSISFKLADMKMQIEAARNLVYKAACKKQEGKPFTVDAAIAKRVASDVAMRVTTEAVQIFGGYGYSEEYPVARHMRDAKITQIYEGTNEVQLMVTGGALLR.

The Proton acceptor role is filled by Glu-367.

The protein belongs to the acyl-CoA dehydrogenase family. In terms of assembly, homotetramer. FAD is required as a cofactor.

The enzyme catalyses butanoyl-CoA + oxidized [electron-transfer flavoprotein] + H(+) = (2E)-butenoyl-CoA + reduced [electron-transfer flavoprotein]. The catalysed reaction is a short-chain 2,3-saturated fatty acyl-CoA + oxidized [electron-transfer flavoprotein] + H(+) = a short-chain (2E)-enoyl-CoA + reduced [electron-transfer flavoprotein]. Its function is as follows. Has an optimum specificity for 4-carbon length fatty acyl-CoAs. This is Acyl-CoA dehydrogenase, short-chain specific from Megasphaera elsdenii.